The chain runs to 390 residues: 1-deoxy-D-xylulose 5-phosphate reductoisomerase (390 aa).

NADPH is bound by residues Thr-18, Gly-19, Ser-20, Ile-21, and Asn-130. Lys-131 lines the 1-deoxy-D-xylulose 5-phosphate pocket. NADPH is bound at residue Glu-132. Asp-156 contacts Mn(2+). Ser-157, Glu-158, Ser-182, and His-205 together coordinate 1-deoxy-D-xylulose 5-phosphate. Residue Glu-158 participates in Mn(2+) binding. Residue Gly-211 participates in NADPH binding. Positions 218, 223, 224, and 227 each coordinate 1-deoxy-D-xylulose 5-phosphate. Glu-227 is a binding site for Mn(2+).

Belongs to the DXR family. Mg(2+) is required as a cofactor. Requires Mn(2+) as cofactor.

It catalyses the reaction 2-C-methyl-D-erythritol 4-phosphate + NADP(+) = 1-deoxy-D-xylulose 5-phosphate + NADPH + H(+). Its pathway is isoprenoid biosynthesis; isopentenyl diphosphate biosynthesis via DXP pathway; isopentenyl diphosphate from 1-deoxy-D-xylulose 5-phosphate: step 1/6. Catalyzes the NADPH-dependent rearrangement and reduction of 1-deoxy-D-xylulose-5-phosphate (DXP) to 2-C-methyl-D-erythritol 4-phosphate (MEP). The sequence is that of 1-deoxy-D-xylulose 5-phosphate reductoisomerase from Bacteroides thetaiotaomicron (strain ATCC 29148 / DSM 2079 / JCM 5827 / CCUG 10774 / NCTC 10582 / VPI-5482 / E50).